The following is a 505-amino-acid chain: Deoxyguanosinetriphosphate triphosphohydrolase (505 aa).

One can recognise an HD domain in the interval 66 to 273 (RLTHSMEVQQ…MEAADDISYC (208 aa)).

This sequence belongs to the dGTPase family. Type 1 subfamily. In terms of assembly, homotetramer. It depends on Mg(2+) as a cofactor.

It carries out the reaction dGTP + H2O = 2'-deoxyguanosine + triphosphate + H(+). DGTPase preferentially hydrolyzes dGTP over the other canonical NTPs. This is Deoxyguanosinetriphosphate triphosphohydrolase from Escherichia coli O127:H6 (strain E2348/69 / EPEC).